The sequence spans 557 residues: Dihydroxy-acid dehydratase (557 aa).

Asp78 is a Mg(2+) binding site. Cys119 lines the [2Fe-2S] cluster pocket. Residues Asp120 and Lys121 each coordinate Mg(2+). Position 121 is an N6-carboxylysine (Lys121). Residue Cys192 participates in [2Fe-2S] cluster binding. A Mg(2+)-binding site is contributed by Glu442. Ser468 functions as the Proton acceptor in the catalytic mechanism.

Belongs to the IlvD/Edd family. In terms of assembly, homodimer. It depends on [2Fe-2S] cluster as a cofactor. Mg(2+) is required as a cofactor.

The enzyme catalyses (2R)-2,3-dihydroxy-3-methylbutanoate = 3-methyl-2-oxobutanoate + H2O. It catalyses the reaction (2R,3R)-2,3-dihydroxy-3-methylpentanoate = (S)-3-methyl-2-oxopentanoate + H2O. The protein operates within amino-acid biosynthesis; L-isoleucine biosynthesis; L-isoleucine from 2-oxobutanoate: step 3/4. Its pathway is amino-acid biosynthesis; L-valine biosynthesis; L-valine from pyruvate: step 3/4. Functionally, functions in the biosynthesis of branched-chain amino acids. Catalyzes the dehydration of (2R,3R)-2,3-dihydroxy-3-methylpentanoate (2,3-dihydroxy-3-methylvalerate) into 2-oxo-3-methylpentanoate (2-oxo-3-methylvalerate) and of (2R)-2,3-dihydroxy-3-methylbutanoate (2,3-dihydroxyisovalerate) into 2-oxo-3-methylbutanoate (2-oxoisovalerate), the penultimate precursor to L-isoleucine and L-valine, respectively. The polypeptide is Dihydroxy-acid dehydratase (Bacillus cereus (strain ZK / E33L)).